The chain runs to 314 residues: Probable carboxylesterase 2 (314 aa).

The Involved in the stabilization of the negatively charged intermediate by the formation of the oxyanion hole signature appears at 79–81 (HGG). Catalysis depends on residues S158, D254, and H286.

Belongs to the 'GDXG' lipolytic enzyme family. As to expression, expressed in roots and flowers.

The enzyme catalyses a carboxylic ester + H2O = an alcohol + a carboxylate + H(+). In terms of biological role, carboxylesterase acting on esters with varying acyl chain length. This chain is Probable carboxylesterase 2 (CXE2), found in Arabidopsis thaliana (Mouse-ear cress).